The sequence spans 506 residues: MKEYQVYLERARSRQQDFLYPLLFREYIYGLAYSHNLNRSIFLENVGYDNKYSLLIVKRLITRMYQQNHLIISANDSNKNTLGGYNPILDSQIISEGFAIVVEIPFLRQLSSSLEEEKILQSYKNLRSIHSIFPFLEDKFTYLHYVSDIRIPYPIHLEILVQILRYWVKDAPFFHLLRLFLYNFCNWNSFFTTKKWISTFSKSNPRLFLFLHNFYVCEYESIFVFLRTKSSHLRLKSFSVFFERIFFYAKREHLVKVFSKDFSYTLTFLKDPNIHYVRYQGKCILASKNAPFLMNKWKHYFIHLWQCFFDLWSQPRMININPLSEHSFQLLGYFLNVRLNRSVVRSQMLQNTFLIEMVIQNLDIIVPIIPLIRSLAKAKFCNILGEPISKPVWADSSDFDIIDRFLRICRNLSHYYNGSSKKKSLYRIKYILRLSCIKTLACKHKSTVRAFLKRSGSEELLQEFFTEEQEILSFIFPRDSSTWQRLHRNRIWYLDILFSNDLVHDE.

The protein belongs to the intron maturase 2 family. MatK subfamily.

Its subcellular location is the plastid. It is found in the chloroplast. Usually encoded in the trnK tRNA gene intron. Probably assists in splicing its own and other chloroplast group II introns. This is Maturase K from Lathyrus tingitanus (Tangier pea).